The chain runs to 360 residues: DNA polymerase IV (360 aa).

The region spanning Ile6–Gly187 is the UmuC domain. Mg(2+) is bound by residues Asp10 and Asp105. Glu106 is an active-site residue.

This sequence belongs to the DNA polymerase type-Y family. As to quaternary structure, monomer. It depends on Mg(2+) as a cofactor.

The protein localises to the cytoplasm. The catalysed reaction is DNA(n) + a 2'-deoxyribonucleoside 5'-triphosphate = DNA(n+1) + diphosphate. Its function is as follows. Poorly processive, error-prone DNA polymerase involved in untargeted mutagenesis. Copies undamaged DNA at stalled replication forks, which arise in vivo from mismatched or misaligned primer ends. These misaligned primers can be extended by PolIV. Exhibits no 3'-5' exonuclease (proofreading) activity. May be involved in translesional synthesis, in conjunction with the beta clamp from PolIII. This Exiguobacterium sibiricum (strain DSM 17290 / CCUG 55495 / CIP 109462 / JCM 13490 / 255-15) protein is DNA polymerase IV.